The primary structure comprises 134 residues: Waprin-Phi1 (134 aa).

The first 23 residues, 1–23 (MTLRRGSCPLLLFSLVGLLTTCA), serve as a signal peptide directing secretion. WAP domains are found at residues 36-82 (VAEK…SCQI) and 83-133 (PDEK…TTAR). Intrachain disulfides connect C43–C72, C55–C76, C59–C71, C65–C80, C90–C120, C103–C124, C107–C119, and C113–C129.

Belongs to the venom waprin family. Expressed by the venom gland.

It is found in the secreted. Functionally, damages membranes of susceptible bacteria. Has no hemolytic activity. Not toxic to mice. Does not inhibit the proteinases elastase and cathepsin G. The chain is Waprin-Phi1 from Philodryas olfersii (Green snake).